The chain runs to 171 residues: Translation initiation factor IF-3 (171 aa).

The protein belongs to the IF-3 family. In terms of assembly, monomer.

The protein resides in the cytoplasm. Functionally, IF-3 binds to the 30S ribosomal subunit and shifts the equilibrium between 70S ribosomes and their 50S and 30S subunits in favor of the free subunits, thus enhancing the availability of 30S subunits on which protein synthesis initiation begins. This chain is Translation initiation factor IF-3, found in Halalkalibacterium halodurans (strain ATCC BAA-125 / DSM 18197 / FERM 7344 / JCM 9153 / C-125) (Bacillus halodurans).